The following is a 441-amino-acid chain: Malate dehydrogenase [NADP], chloroplastic (441 aa).

A chloroplast-targeting transit peptide spans 1–58 (MALTQLNSTCSKPQLHSSSQLSFLSRTRTRTLPRHYHSTFAPLHRTQHARISCSVAPN). C76 and C81 form a disulfide bridge. 105 to 111 (GAAGMIS) contributes to the NADP(+) binding site. 2 residues coordinate substrate: R186 and R192. Residue N199 coordinates NADP(+). Q206 contributes to the NAD(+) binding site. An NADP(+)-binding site is contributed by 223–225 (VGN). The substrate site is built by N225 and R256. H281 (proton acceptor) is an active-site residue. An intrachain disulfide couples C417 to C429.

The protein belongs to the LDH/MDH superfamily. MDH type 2 family. In terms of assembly, homodimer.

The protein resides in the plastid. It localises to the chloroplast. It carries out the reaction (S)-malate + NADP(+) = oxaloacetate + NADPH + H(+). With respect to regulation, chloroplast NADP-MDH is activated upon illumination. In order to be enzymatically active, disulfide bridges on the protein must be reduced by thioredoxin which receives electrons from ferredoxin and the electron transport system of photosynthesis. Functionally, the chloroplastic, NADP-dependent form is essential for the photosynthesis C4 cycle, which allows plants to circumvent the problem of photorespiration. In C4 plants, NADP-MDH activity acts to convert oxaloacetate to malate in chloroplasts of mesophyll cells for transport to the bundle sheath cells. The sequence is that of Malate dehydrogenase [NADP], chloroplastic from Pisum sativum (Garden pea).